Reading from the N-terminus, the 1013-residue chain is Zinc finger and BTB domain-containing protein 4 (1013 aa).

One can recognise a BTB domain in the interval 30 to 152 (CDVTLIAGDT…IYSARLALPG (123 aa)). K40 participates in a covalent cross-link: Glycyl lysine isopeptide (Lys-Gly) (interchain with G-Cter in SUMO2). A compositionally biased stretch (low complexity) spans 67-110 (LPPATGGAAPNPATTTAASSSSSSSSSSSSSSSSASSSSSSSSS). Disordered stretches follow at residues 67 to 124 (LPPA…SPPR) and 183 to 221 (DAWV…AEAQ). The span at 111–121 (SPPPASPPASS) shows a compositional bias: pro residues. Residues 186-348 (VPPTPAPMAT…CRYCEKVFAL (163 aa)) form an interaction with CBFA2T3 region. The C2H2-type 1; atypical zinc finger occupies 234 to 256 (LPCPQCGKSFIHPKRLQTHEAQC). The segment at 257–281 (RRGASTRGSTGLGAGGAGPGGPAGV) is disordered. Residues 266 to 279 (TGLGAGGAGPGGPA) show a composition bias toward gly residues. 3 consecutive C2H2-type zinc fingers follow at residues 309–331 (YVCA…SNVH), 337–359 (YPCR…EVWH), and 365–388 (YQCI…RAFH). The residue at position 391 (S391) is a Phosphoserine. Disordered stretches follow at residues 428-765 (KTYS…STRF), 783-852 (HGQR…DPII), 883-904 (GREP…AGEG), and 972-1013 (VNPQ…GDVG). Over residues 453–470 (ASPPPGPPPAPEPGPPPS) the composition is skewed to pro residues. Composition is skewed to low complexity over residues 496-506 (TASTGGSQAAS) and 531-554 (ATPT…ATTT). K573 is covalently cross-linked (Glycyl lysine isopeptide (Lys-Gly) (interchain with G-Cter in SUMO2)). Residues 576–590 (GGIGGGGGPPTGAGR) show a composition bias toward gly residues. Basic and acidic residues predominate over residues 608–625 (IGEEAIVKRRISETDLRP). Residue K615 forms a Glycyl lysine isopeptide (Lys-Gly) (interchain with G-Cter in SUMO2) linkage. Residues 627–663 (ELSGEEMEESEEDEEEEDEEEEEEDEEESKAGGEDQL) are a coiled coil. Positions 629 to 654 (SGEEMEESEEDEEEEDEEEEEEDEEE) are enriched in acidic residues. Residues 678–689 (AAGGASVGGSGL) are compositionally biased toward gly residues. 2 consecutive C2H2-type zinc fingers follow at residues 726–748 (HRCG…QEAH) and 765–787 (FTCP…GQRH). Residues T795 and T797 each carry the phosphothreonine; by HIPK2 modification. Low complexity predominate over residues 836-846 (TAAEEASETAS). Gly residues predominate over residues 883 to 902 (GREPGGGRGKSGSEGPVGAG). Over residues 976-995 (AAPPAPPTPPPPTLPPPIPP) the composition is skewed to pro residues. Position 983 is a phosphothreonine; by HIPK2 (T983). A compositionally biased stretch (basic and acidic residues) spans 997-1013 (GEGERAGVERTQKGDVG).

Interacts with HIPK2. Interacts with CBFA2T3. Interacts with ZBTB38. Post-translationally, phosphorylated by HIPK2. This phosphorylation reduces stability and triggers ZBTB4 protein degradation in response to DNA damage.

It localises to the nucleus. The protein localises to the chromosome. In terms of biological role, transcriptional repressor with bimodal DNA-binding specificity. Represses transcription in a methyl-CpG-dependent manner. Binds with a higher affinity to methylated CpG dinucleotides in the consensus sequence 5'-CGCG-3' but can also bind to the non-methylated consensus sequence 5'-CTGCNA-3' also known as the consensus kaiso binding site (KBS). Can also bind specifically to a single methyl-CpG pair and can bind hemimethylated DNA but with a lower affinity compared to methylated DNA. Plays a role in postnatal myogenesis, may be involved in the regulation of satellite cells self-renewal. This Homo sapiens (Human) protein is Zinc finger and BTB domain-containing protein 4 (ZBTB4).